The chain runs to 180 residues: Uterocalin (180 aa).

Residues 1 to 18 form the signal peptide; sequence MNLLLLAMGLILPRRPHA. Cysteine 82 and cysteine 175 are joined by a disulfide. N-linked (GlcNAc...) asparagine glycosylation occurs at asparagine 101.

The protein belongs to the calycin superfamily. Lipocalin family. As to expression, expressed in glandular and lumenal epithelia of the endometrium. Is transferred to the embryonic capsule, the conceptus and the yolk sac.

The protein localises to the secreted. Functionally, binds fatty acids and retinol. Is specialized for the preattachment embryo. May be important to maintain the pregnancy and may transport small hydrophobic ligands from mother to the developing embryo. In Equus caballus (Horse), this protein is Uterocalin.